We begin with the raw amino-acid sequence, 347 residues long: 8-amino-8-demethylriboflavin N,N-dimethyltransferase (347 aa).

S-adenosyl-L-methionine is bound by residues aspartate 209 and 235-237 (GDF).

This sequence belongs to the class I-like SAM-binding methyltransferase superfamily. Cation-independent O-methyltransferase family. As to quaternary structure, homodimer.

The catalysed reaction is 8-amino-8-demethylriboflavin + 2 S-adenosyl-L-methionine = roseoflavin + 2 S-adenosyl-L-homocysteine + 2 H(+). It functions in the pathway antibiotic biosynthesis. Its function is as follows. Catalyzes the S-adenosyl methionine-dependent conversion of 8-amino-8-demethyl-D-riboflavin (AF) into 8-methylamino-8-demethyl-D-riboflavin (MAF) and roseoflavin (RoF), the last two steps in the biosynthesis of the antibiotic roseoflavin. In Streptomyces davaonensis (strain DSM 101723 / JCM 4913 / KCC S-0913 / 768), this protein is 8-amino-8-demethylriboflavin N,N-dimethyltransferase.